Reading from the N-terminus, the 371-residue chain is Loganic acid O-methyltransferase (371 aa).

Residue Tyr-31 participates in S-adenosyl-L-homocysteine binding. Loganate contacts are provided by Tyr-37 and Gln-38. The S-adenosyl-L-homocysteine site is built by Cys-78, Asn-83, Asp-114, His-115, Ser-141, and Phe-142. Loganate-binding residues include His-162 and Trp-163. A Mg(2+)-binding site is contributed by Asn-180. Residues Ala-241 and His-245 each coordinate loganate. Mg(2+)-binding residues include Asp-267, Phe-269, and Asn-270. 2 residues coordinate loganate: Gln-273 and Gln-316.

This sequence belongs to the methyltransferase superfamily. Type-7 methyltransferase family. Homodimer. The cofactor is Mg(2+). In terms of tissue distribution, expressed in leaves (especially in leaf epidermis), flowers, siliques and stems, and, at low levels, in hairy roots.

The catalysed reaction is loganate + S-adenosyl-L-methionine = loganin + S-adenosyl-L-homocysteine. It participates in alkaloid biosynthesis. With respect to regulation, strongly repressed by loganin and slightly by S-adenosyl-L-homocysteine. Functionally, component of the seco-iridoid and derivatives monoterpenoid indole alkaloids (MIAs, e.g. vinblastine and ajmalicine) biosynthesis pathway. Catalyzes the methylation of loganic acid (6S,7R) to produce loganin. Weak activity with secologanic acid as substrate. Inactive on deoxyloganic, dehydrologanic, epiloganic and loganetic acid. The polypeptide is Loganic acid O-methyltransferase (Catharanthus roseus (Madagascar periwinkle)).